The sequence spans 824 residues: Probable receptor-like protein kinase At5g24010 (824 aa).

The N-terminal stretch at 1 to 24 is a signal peptide; it reads MAFPINLTQTLLFFFCPLLHLSFA. N-linked (GlcNAc...) asparagine glycosylation is found at asparagine 6, asparagine 41, asparagine 204, asparagine 227, and asparagine 291. Residues 25–406 lie on the Extracellular side of the membrane; sequence AFTPTDNYLI…SSEVVSGKRN (382 aa). Residues 407-427 traverse the membrane as a helical segment; the sequence is VVWIVVGSVLGGFVFLSLFFL. Topologically, residues 428-824 are cytoplasmic; the sequence is SVLCLCRRKN…FSQLMTNAGR (397 aa). A disordered region spans residues 440–467; that stretch reads TRSSESTGWTPLRRFRGSSNSRTTERTV. Residues 456-467 are compositionally biased toward polar residues; sequence GSSNSRTTERTV. The region spanning 489 to 764 is the Protein kinase domain; it reads FDRSLVIGVG…VLWNLEHVLQ (276 aa). Residues 495 to 503 and lysine 517 each bind ATP; that span reads IGVGGFGMV. Aspartate 613 serves as the catalytic Proton acceptor. The interval 777-803 is disordered; it reads DYGDVTDPRTARQGLSNGSNIERDYGD.

The protein belongs to the protein kinase superfamily. Ser/Thr protein kinase family.

Its subcellular location is the membrane. The chain is Probable receptor-like protein kinase At5g24010 from Arabidopsis thaliana (Mouse-ear cress).